Reading from the N-terminus, the 233-residue chain is Small ribosomal subunit protein uS3 (233 aa).

The 69-residue stretch at 39 to 107 (VRKYLTKELE…PAQINIAEVR (69 aa)) folds into the KH type-2 domain. Positions 214–233 (VEQPEKPSAQPKKQQRKGRK) are disordered.

This sequence belongs to the universal ribosomal protein uS3 family. As to quaternary structure, part of the 30S ribosomal subunit. Forms a tight complex with proteins S10 and S14.

Its function is as follows. Binds the lower part of the 30S subunit head. Binds mRNA in the 70S ribosome, positioning it for translation. The protein is Small ribosomal subunit protein uS3 of Pectobacterium atrosepticum (strain SCRI 1043 / ATCC BAA-672) (Erwinia carotovora subsp. atroseptica).